The primary structure comprises 208 residues: Small ribosomal subunit protein uS4 (208 aa).

Residues 30 to 49 (EKRPYAPGEHGRDRRRTESD) form a disordered region. The S4 RNA-binding domain occupies 95–161 (TRLDNLVLRA…VPFQIAAEGV (67 aa)).

This sequence belongs to the universal ribosomal protein uS4 family. In terms of assembly, part of the 30S ribosomal subunit. Contacts protein S5. The interaction surface between S4 and S5 is involved in control of translational fidelity.

One of the primary rRNA binding proteins, it binds directly to 16S rRNA where it nucleates assembly of the body of the 30S subunit. In terms of biological role, with S5 and S12 plays an important role in translational accuracy. The chain is Small ribosomal subunit protein uS4 from Bifidobacterium longum (strain DJO10A).